The following is a 57-amino-acid chain: Large ribosomal subunit protein bL32 (57 aa).

Residues 1–20 are compositionally biased toward basic residues; the sequence is MAVPKKKTSKAKRDQRRATW. The disordered stretch occupies residues 1–24; the sequence is MAVPKKKTSKAKRDQRRATWRRQA.

Belongs to the bacterial ribosomal protein bL32 family.

In Gloeothece citriformis (strain PCC 7424) (Cyanothece sp. (strain PCC 7424)), this protein is Large ribosomal subunit protein bL32.